We begin with the raw amino-acid sequence, 68 residues long: P21 prophage-derived head-stabilizing protein (68 aa).

Belongs to the lambda phage gpW family.

This Escherichia coli O6:H1 (strain CFT073 / ATCC 700928 / UPEC) protein is P21 prophage-derived head-stabilizing protein.